The primary structure comprises 99 residues: Putative membrane protein insertion efficiency factor (99 aa).

Belongs to the UPF0161 family.

It localises to the cell membrane. Its function is as follows. Could be involved in insertion of integral membrane proteins into the membrane. In Levilactobacillus brevis (strain ATCC 367 / BCRC 12310 / CIP 105137 / JCM 1170 / LMG 11437 / NCIMB 947 / NCTC 947) (Lactobacillus brevis), this protein is Putative membrane protein insertion efficiency factor.